The following is a 339-amino-acid chain: Heat-inducible transcription repressor HrcA (339 aa).

It belongs to the HrcA family.

Its function is as follows. Negative regulator of class I heat shock genes (grpE-dnaK-dnaJ and groELS operons). Prevents heat-shock induction of these operons. The sequence is that of Heat-inducible transcription repressor HrcA from Thiobacillus denitrificans (strain ATCC 25259 / T1).